A 744-amino-acid chain; its full sequence is Elongation factor G, mitochondrial (744 aa).

The N-terminal 25 residues, 1–25, are a transit peptide targeting the mitochondrion; that stretch reads MTISCLLRIRPALAKSFFENGQRAF. Residues 38–315 enclose the tr-type G domain; sequence ERIRNIGISA…AVLDYLPNPG (278 aa). GTP-binding positions include 47–54, 114–118, and 168–171; these read AHIDSGKT, DTPGH, and NKLD.

It belongs to the TRAFAC class translation factor GTPase superfamily. Classic translation factor GTPase family. EF-G/EF-2 subfamily.

It localises to the mitochondrion. It participates in protein biosynthesis; polypeptide chain elongation. Mitochondrial GTPase that catalyzes the GTP-dependent ribosomal translocation step during translation elongation. During this step, the ribosome changes from the pre-translocational (PRE) to the post-translocational (POST) state as the newly formed A-site-bound peptidyl-tRNA and P-site-bound deacylated tRNA move to the P and E sites, respectively. Catalyzes the coordinated movement of the two tRNA molecules, the mRNA and conformational changes in the ribosome. This is Elongation factor G, mitochondrial from Culex quinquefasciatus (Southern house mosquito).